The following is a 319-amino-acid chain: ATP-dependent 6-phosphofructokinase (319 aa).

ATP is bound at residue G11. Residue 21-25 (RAVVR) coordinates ADP. ATP-binding positions include 72–73 (RC) and 102–105 (GNGS). A Mg(2+)-binding site is contributed by N103. Residue 125–127 (TID) participates in substrate binding. The active-site Proton acceptor is D127. Residue R154 participates in ADP binding. Residues R162 and 169-171 (MGR) each bind substrate. ADP-binding positions include 185-187 (GAE), R211, and 213-215 (KMH). Substrate-binding positions include E222, R243, and 249 to 252 (HIQR).

This sequence belongs to the phosphofructokinase type A (PFKA) family. ATP-dependent PFK group I subfamily. Prokaryotic clade 'B1' sub-subfamily. Homotetramer. Mg(2+) is required as a cofactor.

It localises to the cytoplasm. The enzyme catalyses beta-D-fructose 6-phosphate + ATP = beta-D-fructose 1,6-bisphosphate + ADP + H(+). It participates in carbohydrate degradation; glycolysis; D-glyceraldehyde 3-phosphate and glycerone phosphate from D-glucose: step 3/4. With respect to regulation, allosterically activated by ADP and other diphosphonucleosides, and allosterically inhibited by phosphoenolpyruvate. Functionally, catalyzes the phosphorylation of D-fructose 6-phosphate to fructose 1,6-bisphosphate by ATP, the first committing step of glycolysis. This Clostridium acetobutylicum (strain ATCC 824 / DSM 792 / JCM 1419 / IAM 19013 / LMG 5710 / NBRC 13948 / NRRL B-527 / VKM B-1787 / 2291 / W) protein is ATP-dependent 6-phosphofructokinase.